The following is a 243-amino-acid chain: Probable transcriptional regulatory protein BDU_30 (243 aa).

Belongs to the TACO1 family.

It localises to the cytoplasm. In Borrelia duttonii (strain Ly), this protein is Probable transcriptional regulatory protein BDU_30.